The following is a 445-amino-acid chain: POU domain, class 3, transcription factor 2 (445 aa).

Disordered regions lie at residues Thr-63–Ala-173, Leu-203–Ser-269, Glu-336–Thr-361, and Glu-411–Gln-445. A compositionally biased stretch (gly residues) spans Gly-68–Gly-90. Over residues Gln-125 to Gln-151 the composition is skewed to low complexity. Residues Leu-217–His-226 are compositionally biased toward basic and acidic residues. The span at Ala-227–Pro-237 shows a compositional bias: basic residues. The segment covering Gln-239–His-253 has biased composition (pro residues). The region spanning Glu-264–Asp-338 is the POU-specific domain. The residue at position 343 (Ser-343) is a Phosphoserine. The homeobox DNA-binding region spans Lys-356–Thr-415.

It belongs to the POU transcription factor family. Class-3 subfamily. In terms of assembly, interacts with PQBP1. Interaction with ISL1. As to expression, expressed specifically at high levels in the brain.

It is found in the nucleus. Functionally, transcription factor that plays a key role in neuronal differentiation. Binds preferentially to the recognition sequence which consists of two distinct half-sites, ('GCAT') and ('TAAT'), separated by a non-conserved spacer region of 0, 2, or 3 nucleotides. Acts as a transcriptional activator when binding cooperatively with SOX4, SOX11, or SOX12 to gene promoters. The combination of three transcription factors, ASCL1, POU3F2/BRN2 and MYT1L, is sufficient to reprogram fibroblasts and other somatic cells into induced neuronal (iN) cells in vitro. Acts downstream of ASCL1, accessing chromatin that has been opened by ASCL1, and promotes transcription of neuronal genes. This chain is POU domain, class 3, transcription factor 2 (Pou3f2), found in Rattus norvegicus (Rat).